We begin with the raw amino-acid sequence, 258 residues long: Alpha-fibrinogenase (258 aa).

Positions 1–18 are cleaved as a signal peptide; sequence MVLIRVLANLVMLHLSYG. The propeptide occupies 19-24; the sequence is EKSSEL. A Peptidase S1 domain is found at 25–249; it reads VIGGRPCNIN…YNDWIQSIIA (225 aa). Cystine bridges form between Cys-31/Cys-163, Cys-50/Cys-66, Cys-98/Cys-256, Cys-142/Cys-210, Cys-174/Cys-189, and Cys-200/Cys-225. A glycan (N-linked (GlcNAc...) asparagine) is linked at Asn-44. His-65 (charge relay system) is an active-site residue. N-linked (GlcNAc...) asparagine glycosylation is found at Asn-79 and Asn-101. Asp-110 serves as the catalytic Charge relay system. The Charge relay system role is filled by Ser-204.

The protein belongs to the peptidase S1 family. Snake venom subfamily. As to quaternary structure, monomer. Glycosylated. Contains 8.5% of hexoses, 5.8% of hexosamines and 0.8% of sialic acids. As to expression, expressed by the venom gland.

It is found in the secreted. Its activity is regulated as follows. Inhibited by diisopropylfluorophosphate (DFP) and PMSF, and partially by soybean trypsin inhibitor, but not by EDTA. Degrades alpha chain of fibrinogen (FGA), and has strong caseinolytic activity. Cleaves oxidized insulin B-chain at '40-Tyr-|-Leu-41', '48-Phe-|-Phe-49' and '49-Phe-|-Tyr-50', and glucagon at the bonds '62-Tyr-|-Ser-63', 66-Leu-|-Asp-67' and '78-Leu-|-Met-79' bonds. In Macrovipera lebetinus (Levantine viper), this protein is Alpha-fibrinogenase.